Consider the following 1107-residue polypeptide: MLITFVVDTSGSMSQKTTNGMTLLDCSKAAIEHFIKIRSKDASMRNDRFFLITSEENPITAVKIGWKDNFNSFIQEVKNLQTKDMSNLGFSLQKSFDFLNQFRVQSSIDNYGQGRNPWFIEPAIIILLTDGSSLTNSSSIIENFTLPKTQFHLNSDPTSEPFRWDQRLFSIVLKFGGISSNKSLPLPMEPAIAPMCDVTGGRCQVATNMKTMIQQVEGLMQKLQGGVVVSFEPLVNQQQAQAQAQQLLPPPPLSLHKMLYVRQQVGFWPIPEGYYPDITSLSLPMRLAHPVIRYSIIEADTHIPENFPFDKYELEPCPLTQYLLTNKIQCTHVFMMNSLQVSGQGEPFGCLRLNSAGNSVNLFVFPYNFPRLWILLEDLTTTFKMMPSQKWKQEFEGYLLSIPPYYINPLRGALKRFCSLNLIPDNIDSQFINFINNTIKKIKSQSISKMESERIINSKQQQQQQQQFSHQQQFQQFQQKQAQQYDSSPSSPSSSPSSSSSNTSGIGSSSGSGNLATKKKSFHQILDQGYSSDILSELIQQDNETSENSELSQELSESSTTGSSGGGSSSNINILQRNVFDIGRVQLLNQLDKMKDHIFKKKIQKDESKHHLPISQMGNYHETIGKRETLRDIDDDKKPNTPLFGNPYRKEKSNQRYMSIDEADEGGNLTSDGEGKNKLTPNKRRRLSGRGYPSLPTLNSLSNTSTTTSTTTTTTTTTPATSTNTTITSSSSSSSSSSSSSSSSSSSSSSSSSSSSSSSSSSSSTITSSPPTTSTNPLLQPTTASITTSTVPIPSTTVSSPITNTSIITTNIHIQPTQISSPPPLSSSLAINQPTQTSSVISSSSSPPPPPPPPPLPIVNNNNVIPSSLVQVTNNNNNIPTVPVNNISPPTSTISSPNNQHLLPTPPNINNTSISTTNVPNISTTTSNESIISQPISPTHKNIAGVVRPFRPNSPPLTIDTLTSSSSSSTIPTTTNGSLSTHDTPNTSPTLSSINYNNNNNNNNNNNNNNNNNNNNNNNNNNRKNSIITTTTPNNETNNIIKFVHKEIRRPTKDNHDIIIQQLSKLFSILSDGNLRLKLLKDTINLAKEYKKSSLISKLIGYIDQIK.

The VWFA domain maps to 2–195 (LITFVVDTSG…LPMEPAIAPM (194 aa)). 5 disordered regions span residues 454–515 (RIIN…SGNL), 542–572 (DNETSENSELSQELSESSTTGSSGGGSSSNI), 629–801 (TLRD…VSSP), 818–861 (QISS…IVNN), and 946–1034 (VVRP…TTPN). Composition is skewed to low complexity over residues 460–513 (QQQQ…SGSG) and 546–562 (SENSELSQELSESSTTG). A compositionally biased stretch (basic and acidic residues) spans 629-639 (TLRDIDDDKKP). Residues 693-801 (PSLPTLNSLS…PIPSTTVSSP (109 aa)) are compositionally biased toward low complexity. A compositionally biased stretch (pro residues) spans 846–857 (SPPPPPPPPPLP). A compositionally biased stretch (low complexity) spans 956-975 (PLTIDTLTSSSSSSTIPTTT). The span at 976-996 (NGSLSTHDTPNTSPTLSSINY) shows a compositional bias: polar residues. Low complexity predominate over residues 997–1034 (NNNNNNNNNNNNNNNNNNNNNNNNNNRKNSIITTTTPN). Positions 1041–1103 (IKFVHKEIRR…SLISKLIGYI (63 aa)) constitute an MIF4G domain.

It belongs to the Integrator subunit 6 family. In terms of assembly, component of the Integrator complex. The core complex associates with protein phosphatase 2A subunits, to form the Integrator-PP2A (INTAC) complex.

The protein resides in the nucleus. The protein localises to the chromosome. In terms of biological role, component of the integrator complex, a multiprotein complex that terminates RNA polymerase II (Pol II) transcription in the promoter-proximal region of genes. The integrator complex provides a quality checkpoint during transcription elongation by driving premature transcription termination of transcripts that are unfavorably configured for transcriptional elongation: the complex terminates transcription by (1) catalyzing dephosphorylation of the C-terminal domain (CTD) of Pol II subunit polr2a, (2) degrading the exiting nascent RNA transcript via endonuclease activity and (3) promoting the release of Pol II from bound DNA. The integrator complex is also involved in terminating the synthesis of non-coding Pol II transcripts, such as enhancer RNAs (eRNAs), small nuclear RNAs (snRNAs), telomerase RNAs and long non-coding RNAs (lncRNAs). Within the integrator complex, INTS6 acts as a molecular adapter that promotes assembly of protein phosphatase 2A (PP2A) subunits to the integrator core complex, promoting recruitment of PP2A to transcription pause-release checkpoint. The protein is Integrator complex subunit 6 homolog (ints6) of Dictyostelium discoideum (Social amoeba).